Consider the following 309-residue polypeptide: Carbamate kinase-like protein (309 aa).

The interval 125–144 (NKPVGPFYNTEETARSANPN) is disordered.

This sequence belongs to the carbamate kinase family.

This chain is Carbamate kinase-like protein, found in Mycoplasma pneumoniae (strain ATCC 29342 / M129 / Subtype 1) (Mycoplasmoides pneumoniae).